We begin with the raw amino-acid sequence, 205 residues long: Molybdenum cofactor guanylyltransferase (205 aa).

Residues 14–16 (LAG), K27, D77, and D107 contribute to the GTP site. Mg(2+) is bound at residue D107.

The protein belongs to the MobA family. As to quaternary structure, monomer. Mg(2+) serves as cofactor.

The protein resides in the cytoplasm. The enzyme catalyses Mo-molybdopterin + GTP + H(+) = Mo-molybdopterin guanine dinucleotide + diphosphate. Transfers a GMP moiety from GTP to Mo-molybdopterin (Mo-MPT) cofactor (Moco or molybdenum cofactor) to form Mo-molybdopterin guanine dinucleotide (Mo-MGD) cofactor. This Burkholderia ambifaria (strain MC40-6) protein is Molybdenum cofactor guanylyltransferase.